The primary structure comprises 346 residues: Probable alcohol dehydrogenase AdhA (346 aa).

Residues Cys51, His73, Cys109, Cys112, Cys115, Cys123, and Cys165 each coordinate Zn(2+).

The protein belongs to the zinc-containing alcohol dehydrogenase family. The cofactor is Zn(2+).

The enzyme catalyses a primary alcohol + NAD(+) = an aldehyde + NADH + H(+). It catalyses the reaction a secondary alcohol + NAD(+) = a ketone + NADH + H(+). This is Probable alcohol dehydrogenase AdhA (adhA) from Mycobacterium tuberculosis (strain CDC 1551 / Oshkosh).